The sequence spans 233 residues: Pathogenesis-related thaumatin-like protein 3.2 (233 aa).

Residues 1–22 (MARAMHTVWIALVPTLFVFLQG) form the signal peptide. Intrachain disulfides connect C36/C232, C77/C87, C92/C98, C145/C221, C151/C204, C159/C169, C173/C182, and C183/C191. Residue N195 is glycosylated (N-linked (GlcNAc...) asparagine).

The protein belongs to the thaumatin family. As to expression, strongly expressed in roots and in female and male strobili, and, to a lower extent, in cotyledons, leaves, stems and pollen grains.

Its function is as follows. May be involved in disease resistance. In Cryptomeria japonica (Japanese cedar), this protein is Pathogenesis-related thaumatin-like protein 3.2.